The chain runs to 108 residues: Putative pterin-4-alpha-carbinolamine dehydratase (108 aa).

The protein belongs to the pterin-4-alpha-carbinolamine dehydratase family.

It catalyses the reaction (4aS,6R)-4a-hydroxy-L-erythro-5,6,7,8-tetrahydrobiopterin = (6R)-L-erythro-6,7-dihydrobiopterin + H2O. In Bordetella avium (strain 197N), this protein is Putative pterin-4-alpha-carbinolamine dehydratase.